Consider the following 88-residue polypeptide: Small ribosomal subunit protein uS15c (88 aa).

It belongs to the universal ribosomal protein uS15 family. In terms of assembly, part of the 30S ribosomal subunit.

The protein localises to the plastid. It is found in the chloroplast. The sequence is that of Small ribosomal subunit protein uS15c (rps15) from Cycas taitungensis (Prince sago).